Here is a 98-residue protein sequence, read N- to C-terminus: NADH-ubiquinone oxidoreductase chain 4L (98 aa).

A run of 3 helical transmembrane segments spans residues 1-21, 26-46, and 58-78; these read MSPM…GLAF, LLSA…ATAT, and ILPM…LAIL.

The protein belongs to the complex I subunit 4L family.

The protein localises to the mitochondrion membrane. It catalyses the reaction a ubiquinone + NADH + 5 H(+)(in) = a ubiquinol + NAD(+) + 4 H(+)(out). Its function is as follows. Core subunit of the mitochondrial membrane respiratory chain NADH dehydrogenase (Complex I) which catalyzes electron transfer from NADH through the respiratory chain, using ubiquinone as an electron acceptor. Part of the enzyme membrane arm which is embedded in the lipid bilayer and involved in proton translocation. The protein is NADH-ubiquinone oxidoreductase chain 4L (MT-ND4L) of Scyliorhinus canicula (Small-spotted catshark).